The primary structure comprises 212 residues: Urease accessory protein UreG 2 (212 aa).

11–18 (GPVGSGKM) is a GTP binding site.

This sequence belongs to the SIMIBI class G3E GTPase family. UreG subfamily. As to quaternary structure, homodimer. UreD, UreF and UreG form a complex that acts as a GTP-hydrolysis-dependent molecular chaperone, activating the urease apoprotein by helping to assemble the nickel containing metallocenter of UreC. The UreE protein probably delivers the nickel.

Its subcellular location is the cytoplasm. In terms of biological role, facilitates the functional incorporation of the urease nickel metallocenter. This process requires GTP hydrolysis, probably effectuated by UreG. Disrupting the ure2 operon has no effect on urease activity, or pathogen survival in BALB/c mice when inoculated by gavage, but confers slightly enhanced resistance to low pH killing in vitro. The sequence is that of Urease accessory protein UreG 2 from Brucella suis biovar 1 (strain 1330).